Here is a 391-residue protein sequence, read N- to C-terminus: Na(+)/H(+) antiporter NhaA 1 (391 aa).

11 helical membrane-spanning segments follow: residues 25 to 45, 56 to 76, 98 to 118, 128 to 148, 157 to 177, 180 to 200, 208 to 228, 264 to 284, 297 to 317, 335 to 355, and 364 to 384; these read AGGI…NSPL, VWLG…IFFL, ALPG…YIAI, GWAI…SLLG, VFLA…IAFF, AGLN…LIVM, LLPY…SGVH, VAFA…LAGI, VALG…VLAI, GVAM…NLAF, and EVKV…IVLL.

The protein belongs to the NhaA Na(+)/H(+) (TC 2.A.33) antiporter family.

The protein localises to the cell inner membrane. It catalyses the reaction Na(+)(in) + 2 H(+)(out) = Na(+)(out) + 2 H(+)(in). Na(+)/H(+) antiporter that extrudes sodium in exchange for external protons. The sequence is that of Na(+)/H(+) antiporter NhaA 1 from Pseudomonas syringae pv. syringae (strain B728a).